The following is an 89-amino-acid chain: Small ribosomal subunit protein uS14A (89 aa).

This sequence belongs to the universal ribosomal protein uS14 family. Contacts proteins S3 and S10. Part of the 30S ribosomal subunit.

Functionally, binds 16S rRNA, required for the assembly of 30S particles and may also be responsible for determining the conformation of the 16S rRNA at the A site. In terms of biological role, non-essential protein. A second form of uS14, it can integrate into the 30S subunit where it partially compensates for loss of the major uS14 protein (AC P12878) in restoring 70S formation, although it does not seem to be incorporated into the ribosome as well as the major uS14. This is Small ribosomal subunit protein uS14A from Bacillus subtilis (strain 168).